Consider the following 188-residue polypeptide: dCTP deaminase (188 aa).

Residues 111-116 (KSTYAR), 135-137 (TLE), Gln-156, Tyr-170, and Gln-180 contribute to the dCTP site. The active-site Proton donor/acceptor is Glu-137.

Belongs to the dCTP deaminase family. In terms of assembly, homotrimer.

It carries out the reaction dCTP + H2O + H(+) = dUTP + NH4(+). Its pathway is pyrimidine metabolism; dUMP biosynthesis; dUMP from dCTP (dUTP route): step 1/2. Functionally, catalyzes the deamination of dCTP to dUTP. In Aromatoleum aromaticum (strain DSM 19018 / LMG 30748 / EbN1) (Azoarcus sp. (strain EbN1)), this protein is dCTP deaminase.